Consider the following 493-residue polypeptide: Cobyric acid synthase (493 aa).

Positions 252–440 constitute a GATase cobBQ-type domain; sequence PVKIVVLRLR…IHGIFESDSL (189 aa). Cys-333 (nucleophile) is an active-site residue. His-432 is an active-site residue.

It belongs to the CobB/CobQ family. CobQ subfamily.

Its pathway is cofactor biosynthesis; adenosylcobalamin biosynthesis. Functionally, catalyzes amidations at positions B, D, E, and G on adenosylcobyrinic A,C-diamide. NH(2) groups are provided by glutamine, and one molecule of ATP is hydrogenolyzed for each amidation. In Thermodesulfovibrio yellowstonii (strain ATCC 51303 / DSM 11347 / YP87), this protein is Cobyric acid synthase.